Reading from the N-terminus, the 1361-residue chain is Xanthine dehydrogenase 1 (1361 aa).

The 87-residue stretch at 15–101 (TEALLYVNGV…GMHVISIEGL (87 aa)) folds into the 2Fe-2S ferredoxin-type domain. [2Fe-2S] cluster-binding residues include Cys53, Cys58, Cys61, Cys83, Cys123, Cys126, Cys159, and Cys161. Residues 257 to 442 (RGNGGITWYR…LSVFLPWTRP (186 aa)) enclose the FAD-binding PCMH-type domain. FAD contacts are provided by residues 285–292 (LLVGNTEV), Phe365, 375–379 (CIGGN), Asp388, Leu432, and Lys450. 2 residues coordinate Mo-molybdopterin: Gln796 and Phe827. Residues Glu831 and Arg909 each contribute to the substrate site. Position 941 (Arg941) interacts with Mo-molybdopterin. 2 residues coordinate substrate: Phe943 and Thr1039. Ala1108 serves as a coordination point for Mo-molybdopterin. The active-site Proton acceptor is Glu1297.

The protein belongs to the xanthine dehydrogenase family. As to quaternary structure, homodimer. Requires [2Fe-2S] cluster as cofactor. The cofactor is FAD. It depends on Mo-molybdopterin as a cofactor. In terms of tissue distribution, expressed in roots, leaves, stems, flowers and siliques.

It catalyses the reaction xanthine + NAD(+) + H2O = urate + NADH + H(+). It carries out the reaction hypoxanthine + NAD(+) + H2O = xanthine + NADH + H(+). Key enzyme involved in purine catabolism. Catalyzes the oxidation of hypoxanthine to xanthine and the oxidation of xanthine to urate. Regulates the level of ureides and plays an important role during plant growth and development, senescence and response to stresses. Possesses NADH oxidase activity and may contribute to the generation of superoxide anions in planta. This Arabidopsis thaliana (Mouse-ear cress) protein is Xanthine dehydrogenase 1 (XDH1).